Consider the following 365-residue polypeptide: Peptide chain release factor 2 (365 aa).

Glutamine 249 carries the N5-methylglutamine modification.

The protein belongs to the prokaryotic/mitochondrial release factor family. In terms of processing, methylated by PrmC. Methylation increases the termination efficiency of RF2.

The protein localises to the cytoplasm. Its function is as follows. Peptide chain release factor 2 directs the termination of translation in response to the peptide chain termination codons UGA and UAA. In Acholeplasma laidlawii (strain PG-8A), this protein is Peptide chain release factor 2.